The following is a 438-amino-acid chain: ATP-dependent RNA helicase SUB2 (438 aa).

Positions methionine 1–glutamine 16 are enriched in acidic residues. The disordered stretch occupies residues methionine 1–glutamate 41. A compositionally biased stretch (low complexity) spans proline 21 to alanine 38. The short motif at threonine 52–glutamine 80 is the Q motif element. The region spanning isoleucine 83–isoleucine 260 is the Helicase ATP-binding domain. Residue alanine 96–threonine 103 participates in ATP binding. The short motif at aspartate 207–aspartate 210 is the DEAD box element. Positions lysine 288–alanine 433 constitute a Helicase C-terminal domain.

Belongs to the DEAD box helicase family. DECD subfamily.

The protein resides in the nucleus. The catalysed reaction is ATP + H2O = ADP + phosphate + H(+). Functionally, ATP-binding RNA helicase involved in transcription elongation and required for the export of mRNA out of the nucleus. SUB2 also plays a role in pre-mRNA splicing and spliceosome assembly. May be involved in rDNA and telomeric silencing, and maintenance of genome integrity. This chain is ATP-dependent RNA helicase SUB2 (SUB2), found in Phaeosphaeria nodorum (strain SN15 / ATCC MYA-4574 / FGSC 10173) (Glume blotch fungus).